The sequence spans 85 residues: Large ribosomal subunit protein bL31B (85 aa).

The protein belongs to the bacterial ribosomal protein bL31 family. Type B subfamily. In terms of assembly, part of the 50S ribosomal subunit.

The protein is Large ribosomal subunit protein bL31B of Bifidobacterium longum subsp. infantis (strain ATCC 15697 / DSM 20088 / JCM 1222 / NCTC 11817 / S12).